Consider the following 56-residue polypeptide: MANAVRIKIGLKCQESGDINYTTWKNPKTHTEKFEVKKYCPRLKKHTTHKEVKLKS.

The protein belongs to the bacterial ribosomal protein bL33 family.

The sequence is that of Large ribosomal subunit protein bL33 from Aliarcobacter butzleri (strain RM4018) (Arcobacter butzleri).